A 189-amino-acid chain; its full sequence is Elongation factor P (189 aa).

It belongs to the elongation factor P family.

It localises to the cytoplasm. It participates in protein biosynthesis; polypeptide chain elongation. Functionally, involved in peptide bond synthesis. Stimulates efficient translation and peptide-bond synthesis on native or reconstituted 70S ribosomes in vitro. Probably functions indirectly by altering the affinity of the ribosome for aminoacyl-tRNA, thus increasing their reactivity as acceptors for peptidyl transferase. This Rhizobium johnstonii (strain DSM 114642 / LMG 32736 / 3841) (Rhizobium leguminosarum bv. viciae) protein is Elongation factor P.